A 463-amino-acid polypeptide reads, in one-letter code: Bifunctional protein HldE (463 aa).

The interval 1-313 (MTGPMAVRTD…RALAALPDTD (313 aa)) is ribokinase. D258 is an active-site residue. The cytidylyltransferase stretch occupies residues 331-463 (AAGGCFDLLH…LLARAAEGAR (133 aa)).

It in the N-terminal section; belongs to the carbohydrate kinase PfkB family. In the C-terminal section; belongs to the cytidylyltransferase family. In terms of assembly, homodimer.

It carries out the reaction D-glycero-beta-D-manno-heptose 7-phosphate + ATP = D-glycero-beta-D-manno-heptose 1,7-bisphosphate + ADP + H(+). The enzyme catalyses D-glycero-beta-D-manno-heptose 1-phosphate + ATP + H(+) = ADP-D-glycero-beta-D-manno-heptose + diphosphate. It functions in the pathway nucleotide-sugar biosynthesis; ADP-L-glycero-beta-D-manno-heptose biosynthesis; ADP-L-glycero-beta-D-manno-heptose from D-glycero-beta-D-manno-heptose 7-phosphate: step 1/4. Its pathway is nucleotide-sugar biosynthesis; ADP-L-glycero-beta-D-manno-heptose biosynthesis; ADP-L-glycero-beta-D-manno-heptose from D-glycero-beta-D-manno-heptose 7-phosphate: step 3/4. Its function is as follows. Catalyzes the phosphorylation of D-glycero-D-manno-heptose 7-phosphate at the C-1 position to selectively form D-glycero-beta-D-manno-heptose-1,7-bisphosphate. In terms of biological role, catalyzes the ADP transfer from ATP to D-glycero-beta-D-manno-heptose 1-phosphate, yielding ADP-D-glycero-beta-D-manno-heptose. The polypeptide is Bifunctional protein HldE (Streptomyces coelicolor (strain ATCC BAA-471 / A3(2) / M145)).